A 30-amino-acid chain; its full sequence is Varv peptide B (30 aa).

The cyclopeptide (Gly-Asn) cross-link spans 1–30 (GLPVCGETCFGGTCNTPGCSCDPWPMCSRN). 3 disulfides stabilise this stretch: cysteine 5-cysteine 19, cysteine 9-cysteine 21, and cysteine 14-cysteine 27.

This is a cyclic peptide.

Its function is as follows. Probably participates in a plant defense mechanism. The polypeptide is Varv peptide B (Viola arvensis (European field pansy)).